The primary structure comprises 215 residues: GTP-binding nuclear protein Ran (215 aa).

The region spanning 6–170 (DIPTFKLVLV…LWLVRKLLGD (165 aa)) is the Small GTPase Ran-type domain. Residues 17–24 (DGGTGKTT), 35–41 (EKKYVAT), Gly-67, 121–124 (NFVD), and 149–151 (SAK) contribute to the GTP site. The switch-I stretch occupies residues 36–44 (KKYVATLGV). Positions 67–83 (GQEKFGGLRDGYYIQGQ) are switch-II. Residues 210–215 (DDDEDL) form an interaction with RANBP1 region.

Belongs to the small GTPase superfamily. Ran family. Monomer. Interacts with RANGAP1, which promotes RAN-mediated GTP hydrolysis. Interacts with KPNB1. Interaction with KPNB1 inhibits RANGAP1-mediated stimulation of GTPase activity. Interacts with RCC1 which promotes the exchange of RAN-bound GDP by GTP. Interaction with KPNB1 inhibits RCC1-mediated exchange of RAN-bound GDP by GTP. Interacts (GTP-bound form) with TNPO1; the interaction is direct. Interacts with KPNB1 and with TNPO1; both inhibit RAN GTPase activity. Interacts (via C-terminus) with RANBP1, which alleviates the inhibition of RAN GTPase activity. Interacts with RANGRF, which promotes the release of bound guanine nucleotide. RANGRF and RCC1 compete for an overlapping binding site on RAN. Identified in a complex with KPNA2 and CSE1L; interaction with RANBP1 mediates dissociation of RAN from this complex. Interaction with both RANBP1 and KPNA2 promotes dissociation of the complex between RAN and KPNB1. Identified in a complex composed of RAN, RANGAP1 and RANBP1. Identified in a complex that contains TNPO1, RAN and RANBP1. Identified in a nuclear export complex with XPO1. Interaction with RANBP1 or RANBP2 induces a conformation change in the complex formed by XPO1 and RAN that triggers the release of the nuclear export signal of cargo proteins. Component of a nuclear export receptor complex composed of KPNB1, RAN, SNUPN and XPO1. It depends on Mg(2+) as a cofactor.

The protein resides in the nucleus. It is found in the nucleus envelope. The protein localises to the cytoplasm. It localises to the cytosol. Its function is as follows. GTPase involved in nucleocytoplasmic transport, participating both to the import and the export from the nucleus of proteins and RNAs. Switches between a cytoplasmic GDP- and a nuclear GTP-bound state by nucleotide exchange and GTP hydrolysis. Nuclear import receptors such as importin beta bind their substrates only in the absence of GTP-bound RAN and release them upon direct interaction with GTP-bound RAN, while export receptors behave in the opposite way. Thereby, RAN controls cargo loading and release by transport receptors in the proper compartment and ensures the directionality of the transport. Interaction with RANBP1 induces a conformation change in the complex formed by XPO1 and RAN that triggers the release of the nuclear export signal of cargo proteins. RAN (GTP-bound form) triggers microtubule assembly at mitotic chromosomes and is required for normal mitotic spindle assembly and chromosome segregation. Required for normal progress through mitosis. This is GTP-binding nuclear protein Ran (ran-1) from Onchocerca volvulus.